A 190-amino-acid polypeptide reads, in one-letter code: MEAEDGARVRNEDVPPQNQDLSFLQPSVTAFMSEYGWYLLFGCVGVYLLIQHLRKSRSSTQTRSSSGSAEAHDVGSVVRRQEALEASRRRMQEEQDARAAEFREKQRMLEEEKRRQKIEMWDSMQEGKSYKGSAKVAQQNTEEAASSSSLRPKTEKKPLRSSGYSPLSGDAGGSCSWRPGRRGPSAGGUG.

Residues 1-13 (MEAEDGARVRNED) show a composition bias toward basic and acidic residues. Residues 1 to 20 (MEAEDGARVRNEDVPPQNQD) form a disordered region. Residues 30–50 (AFMSEYGWYLLFGCVGVYLLI) traverse the membrane as a helical segment. A compositionally biased stretch (low complexity) spans 58-68 (SSTQTRSSSGS). Residues 58–190 (SSTQTRSSSG…RRGPSAGGUG (133 aa)) are disordered. Residues 79–120 (RRQEALEASRRRMQEEQDARAAEFREKQRMLEEEKRRQKIEM) are compositionally biased toward basic and acidic residues. The segment covering 136 to 151 (VAQQNTEEAASSSSLR) has biased composition (polar residues). Residue U189 is a non-standard amino acid, selenocysteine.

Belongs to the selenoprotein S family.

Its subcellular location is the endoplasmic reticulum membrane. It localises to the cytoplasm. Its function is as follows. Involved in the degradation process of misfolded endoplasmic reticulum (ER) luminal proteins. Participates in the transfer of misfolded proteins from the ER to the cytosol, where they are destroyed by the proteasome in a ubiquitin-dependent manner. The protein is Selenoprotein S (vimp) of Danio rerio (Zebrafish).